We begin with the raw amino-acid sequence, 388 residues long: Oxytocin receptor (388 aa).

Over 1-38 (MEGTPAANWSIELDLGSGVPPGAEGNLTAGPPRRNEAL) the chain is Extracellular. Residues N8 and N26 are each glycosylated (N-linked (GlcNAc...) asparagine). The chain crosses the membrane as a helical span at residues 39 to 63 (ARVEVAVLCLILFLALSGNACVLLA). The Cytoplasmic segment spans residues 64–74 (LRTTRHKHSRL). A helical membrane pass occupies residues 75 to 97 (FFFMKHLSIADLVVAVFQVLPQL). Residues 98-113 (LWDITFRFYGPDLLCR) lie on the Extracellular side of the membrane. A disulfide bond links C112 and C187. Residues 114–135 (LVKYLQVVGMFASTYLLLLMSL) form a helical membrane-spanning segment. Residues 136 to 154 (DRCLAICQPLRSLRRRTDR) lie on the Cytoplasmic side of the membrane. A helical transmembrane segment spans residues 155–175 (LAVLATWLGCLVASVPQVHIF). The Extracellular portion of the chain corresponds to 176–202 (SLREVADGVFDCWAVFIQPWGPKAYVT). The chain crosses the membrane as a helical span at residues 203–225 (WITLAVYIVPVIVLAACYGLISF). Topologically, residues 226–274 (KIWQNLRLKTAAAAAAAEGSDAAGGAGRAALARVSSVKLISKAKIRTVK) are cytoplasmic. Residues 275-293 (MTFIIVLAFIVCWTPFFFV) form a helical membrane-spanning segment. The Extracellular portion of the chain corresponds to 294–308 (QMWSVWDVNAPKEAS). The chain crosses the membrane as a helical span at residues 309 to 331 (AFIIAMLLASLNSCCNPWIYMLF). The Cytoplasmic segment spans residues 332–388 (TGHLFHELVQRFLCCSARYLKGSRPGETSISKKSNSSTFVLSRRSSSQRSCSQPSSA). The segment at 354–388 (SRPGETSISKKSNSSTFVLSRRSSSQRSCSQPSSA) is disordered. A phosphoserine mark is found at S365 and S367. Positions 365 to 388 (SNSSTFVLSRRSSSQRSCSQPSSA) are enriched in low complexity.

It belongs to the G-protein coupled receptor 1 family. Vasopressin/oxytocin receptor subfamily.

It localises to the cell membrane. Its function is as follows. Receptor for oxytocin. The activity of this receptor is mediated by G proteins which activate a phosphatidylinositol-calcium second messenger system. The chain is Oxytocin receptor (Oxtr) from Mus musculus (Mouse).